The chain runs to 650 residues: Serine/threonine-protein kinase oca2 (650 aa).

The span at 1 to 14 (MSVTPPNVQFNLNG) shows a compositional bias: polar residues. Disordered regions lie at residues 1 to 210 (MSVT…PHDI) and 222 to 288 (HHGK…KSSA). Ser72 carries the phosphoserine modification. Positions 78 to 98 (NHIDPKLAEDRYRSSAARHFE) are enriched in basic and acidic residues. The segment covering 140–154 (PSGSTGYTSPALSQN) has biased composition (polar residues). Basic residues-rich tracts occupy residues 222 to 231 (HHGKHGHHGH) and 245 to 257 (HDKH…HEKH). Residues 258–279 (HSSLDLRRFFKSHQKTDKEKKP) show a composition bias toward basic and acidic residues. Ser286 is subject to Phosphoserine. The 313-residue stretch at 302–614 (GKFGRMLGSG…IHRVFADNWI (313 aa)) folds into the Protein kinase domain. Residues 308–316 (LGSGAGGSV) and Lys331 contribute to the ATP site. Asp425 acts as the Proton acceptor in catalysis. A disordered region spans residues 549-570 (PIRKTDESHSPNSKTDNSSTHK).

It belongs to the protein kinase superfamily. Ser/Thr protein kinase family.

It is found in the cytoplasm. The enzyme catalyses L-seryl-[protein] + ATP = O-phospho-L-seryl-[protein] + ADP + H(+). The catalysed reaction is L-threonyl-[protein] + ATP = O-phospho-L-threonyl-[protein] + ADP + H(+). Overexpression causes cell cycle arrest. This chain is Serine/threonine-protein kinase oca2, found in Schizosaccharomyces pombe (strain 972 / ATCC 24843) (Fission yeast).